Consider the following 380-residue polypeptide: Cytochrome b (380 aa).

A run of 4 helical transmembrane segments spans residues 34-54, 78-99, 114-134, and 179-199; these read FGSL…LLAM, WLLH…FLHI, WNTG…GYVL, and FFAL…IHLM. Residues H84 and H98 each coordinate heme b. Residues H183 and H197 each coordinate heme b. Position 202 (H202) interacts with a ubiquinone. The next 4 helical transmembrane spans lie at 227–247, 289–309, 321–341, and 348–368; these read IKDI…TLFS, LGGV…PFLH, LSQT…WVGS, and FIII…ILFP.

The protein belongs to the cytochrome b family. The cytochrome bc1 complex contains 11 subunits: 3 respiratory subunits (MT-CYB, CYC1 and UQCRFS1), 2 core proteins (UQCRC1 and UQCRC2) and 6 low-molecular weight proteins (UQCRH/QCR6, UQCRB/QCR7, UQCRQ/QCR8, UQCR10/QCR9, UQCR11/QCR10 and a cleavage product of UQCRFS1). This cytochrome bc1 complex then forms a dimer. Heme b serves as cofactor.

The protein resides in the mitochondrion inner membrane. In terms of biological role, component of the ubiquinol-cytochrome c reductase complex (complex III or cytochrome b-c1 complex) that is part of the mitochondrial respiratory chain. The b-c1 complex mediates electron transfer from ubiquinol to cytochrome c. Contributes to the generation of a proton gradient across the mitochondrial membrane that is then used for ATP synthesis. The sequence is that of Cytochrome b (MT-CYB) from Meleagris gallopavo (Wild turkey).